Consider the following 156-residue polypeptide: Ribonuclease H (156 aa).

One can recognise an RNase H type-1 domain in the interval 3 to 144; sequence ERKLIHIFTD…CDILARSAAE (142 aa). The Mg(2+) site is built by aspartate 12, glutamate 50, aspartate 72, and aspartate 136.

The protein belongs to the RNase H family. As to quaternary structure, monomer. Requires Mg(2+) as cofactor.

It localises to the cytoplasm. The catalysed reaction is Endonucleolytic cleavage to 5'-phosphomonoester.. Endonuclease that specifically degrades the RNA of RNA-DNA hybrids. The protein is Ribonuclease H of Shewanella putrefaciens (strain CN-32 / ATCC BAA-453).